Here is a 635-residue protein sequence, read N- to C-terminus: DNA-directed RNA polymerase III subunit rpc3 (635 aa).

3 disordered regions span residues 131–164 (PEQS…SDQQ), 246–295 (VPRG…GYDT), and 386–424 (SGSI…LSSG). Residues 272–292 (SVDEDDEQDEEENEWSDDEMG) show a composition bias toward acidic residues. Residues 398–407 (DNRRGKRPLE) show a composition bias toward basic and acidic residues. The segment covering 411–424 (NGTNHEGANGLSSG) has biased composition (polar residues). Residues 562–583 (TYKAMSRCFQRLRFERNRLKEF) form a leucine-zipper region.

It belongs to the RNA polymerase beta chain family. In terms of assembly, component of the RNA polymerase III (Pol III) complex consisting of 17 subunits.

It localises to the nucleus. Functionally, DNA-dependent RNA polymerase catalyzes the transcription of DNA into RNA using the four ribonucleoside triphosphates as substrates. Specific core component of RNA polymerase III which synthesizes small RNAs, such as 5S rRNA and tRNAs. In Aspergillus clavatus (strain ATCC 1007 / CBS 513.65 / DSM 816 / NCTC 3887 / NRRL 1 / QM 1276 / 107), this protein is DNA-directed RNA polymerase III subunit rpc3 (rpc82).